We begin with the raw amino-acid sequence, 428 residues long: Phosphomethylpyrimidine synthase 1 (428 aa).

Substrate contacts are provided by residues M94, Y123, H162, 184–186, 225–228, and E264; these read SRG and NGMR. H268 serves as a coordination point for Zn(2+). Residue Y291 coordinates substrate. H332 is a binding site for Zn(2+). 3 residues coordinate [4Fe-4S] cluster: C408, C411, and C415.

It belongs to the ThiC family. [4Fe-4S] cluster serves as cofactor.

It carries out the reaction 5-amino-1-(5-phospho-beta-D-ribosyl)imidazole + S-adenosyl-L-methionine = 4-amino-2-methyl-5-(phosphooxymethyl)pyrimidine + CO + 5'-deoxyadenosine + formate + L-methionine + 3 H(+). Its pathway is cofactor biosynthesis; thiamine diphosphate biosynthesis. In terms of biological role, catalyzes the synthesis of the hydroxymethylpyrimidine phosphate (HMP-P) moiety of thiamine from aminoimidazole ribotide (AIR) in a radical S-adenosyl-L-methionine (SAM)-dependent reaction. This chain is Phosphomethylpyrimidine synthase 1, found in Methanosarcina barkeri (strain Fusaro / DSM 804).